Consider the following 183-residue polypeptide: Small ribosomal subunit protein uS4c (183 aa).

Residues 82–143 (MRLDNILFRL…KQRSKALIQN (62 aa)) form the S4 RNA-binding domain.

It belongs to the universal ribosomal protein uS4 family. As to quaternary structure, part of the 30S ribosomal subunit. Contacts protein S5. The interaction surface between S4 and S5 is involved in control of translational fidelity.

It localises to the plastid. The protein localises to the chloroplast. Its function is as follows. One of the primary rRNA binding proteins, it binds directly to 16S rRNA where it nucleates assembly of the body of the 30S subunit. In terms of biological role, with S5 and S12 plays an important role in translational accuracy. In Freesia sp. (strain Lejeune 1997), this protein is Small ribosomal subunit protein uS4c (rps4).